Here is a 348-residue protein sequence, read N- to C-terminus: tRNA N6-adenosine threonylcarbamoyltransferase (348 aa).

Positions 109 and 113 each coordinate Fe cation. Substrate is bound by residues 136-140, aspartate 169, glycine 182, aspartate 186, and asparagine 284; that span reads TVSGG. Residue aspartate 312 participates in Fe cation binding.

It belongs to the KAE1 / TsaD family. The cofactor is Fe(2+).

Its subcellular location is the cytoplasm. It catalyses the reaction L-threonylcarbamoyladenylate + adenosine(37) in tRNA = N(6)-L-threonylcarbamoyladenosine(37) in tRNA + AMP + H(+). In terms of biological role, required for the formation of a threonylcarbamoyl group on adenosine at position 37 (t(6)A37) in tRNAs that read codons beginning with adenine. Is involved in the transfer of the threonylcarbamoyl moiety of threonylcarbamoyl-AMP (TC-AMP) to the N6 group of A37, together with TsaE and TsaB. TsaD likely plays a direct catalytic role in this reaction. The polypeptide is tRNA N6-adenosine threonylcarbamoyltransferase (Chlorobium luteolum (strain DSM 273 / BCRC 81028 / 2530) (Pelodictyon luteolum)).